Here is a 455-residue protein sequence, read N- to C-terminus: Probable transcription factor GLK1 (455 aa).

Low complexity predominate over residues 145 to 163; the sequence is AAVEAKSSSPSSTTSSSQE. The interval 145–183 is disordered; the sequence is AAVEAKSSSPSSTTSSSQEAESRHKSSSKSSHGKKKAKV. Residues 169–181 are compositionally biased toward basic residues; that stretch reads KSSSKSSHGKKKA. Residues 177–236 enclose the HTH myb-type domain; sequence GKKKAKVDWTPELHRRFVQAVEQLGIDKAVPSRILEIMGIDSLTRHNIASHLQKYRSHRK. The H-T-H motif DNA-binding region spans 207 to 232; sequence PSRILEIMGIDSLTRHNIASHLQKYR.

As to expression, expressed in leaves.

The protein localises to the nucleus. Probable transcriptional activator that promotes chloroplast development. Acts as an activator of nuclear photosynthetic genes involved in chlorophyll biosynthesis, light harvesting, and electron transport. The polypeptide is Probable transcription factor GLK1 (GLK1) (Oryza sativa subsp. japonica (Rice)).